Here is a 329-residue protein sequence, read N- to C-terminus: D-alanine--D-alanine ligase (329 aa).

In terms of domain architecture, ATP-grasp spans 120-326; that stretch reads KLWYDALDIP…FHEFLEDCIN (207 aa). 150–205 is an ATP binding site; it reads AFEKWGKVFVKAARQGSSVGCYSVAEKQAIAKAVNDAFGYSDQVLVEKAVKPRELE. Mg(2+)-binding residues include aspartate 280, glutamate 293, and asparagine 295.

It belongs to the D-alanine--D-alanine ligase family. Mg(2+) is required as a cofactor. Mn(2+) serves as cofactor.

The protein resides in the cytoplasm. The enzyme catalyses 2 D-alanine + ATP = D-alanyl-D-alanine + ADP + phosphate + H(+). It participates in cell wall biogenesis; peptidoglycan biosynthesis. In terms of biological role, cell wall formation. This chain is D-alanine--D-alanine ligase, found in Vibrio parahaemolyticus serotype O3:K6 (strain RIMD 2210633).